A 132-amino-acid chain; its full sequence is Histone H2B.2 (132 aa).

Basic and acidic residues predominate over residues 1-19 (MAPKAEKKPASKAPAEKKP). Residues 1 to 39 (MAPKAEKKPASKAPAEKKPAAKKTSSSVDPSKKRTKARK) form a disordered region. An N6-acetyllysine; alternate mark is found at lysine 7 and lysine 8. Residues lysine 7 and lysine 8 each participate in a glycyl lysine isopeptide (Lys-Gly) (interchain with G-Cter in SUMO); alternate cross-link. A Phosphoserine modification is found at serine 11. The residue at position 12 (lysine 12) is an N6-acetyllysine. Lysine 17 is subject to N6-acetyllysine; alternate. Lysine 17 is covalently cross-linked (Glycyl lysine isopeptide (Lys-Gly) (interchain with G-Cter in SUMO); alternate). A Glycyl lysine isopeptide (Lys-Gly) (interchain with G-Cter in SUMO) cross-link involves residue lysine 18. Residue lysine 125 forms a Glycyl lysine isopeptide (Lys-Gly) (interchain with G-Cter in ubiquitin) linkage.

Belongs to the histone H2B family. The nucleosome is a histone octamer containing two molecules each of H2A, H2B, H3 and H4 assembled in one H3-H4 heterotetramer and two H2A-H2B heterodimers. The octamer wraps approximately 147 bp of DNA. Post-translationally, monoubiquitinated by the UBC2-BRE1 complex to form H2BK123ub1. H2BK123ub1 gives a specific tag for epigenetic transcriptional activation and is also prerequisite for H3K4me and H3K79me formation. H2BK123ub1 also modulates the formation of double-strand breaks during meiosis and is a prerequisite for DNA-damage checkpoint activation. Phosphorylated by STE20 to form H2BS10ph during progression through meiotic prophase. May be correlated with chromosome condensation. In terms of processing, acetylated by GCN5 to form H2BK11ac and H2BK16ac. H2BK16ac can also be formed by ESA1. Acetylation of N-terminal lysines and particularly formation of H2BK11acK16ac has a positive effect on transcription. Post-translationally, sumoylation to form H2BK6su or H2BK7su, and probably also H2BK16su or H2BK17su, occurs preferentially near the telomeres and represses gene transcription.

Its subcellular location is the nucleus. It is found in the chromosome. Core component of nucleosome. Nucleosomes wrap and compact DNA into chromatin, limiting DNA accessibility to the cellular machineries which require DNA as a template. Histones thereby play a central role in transcription regulation, DNA repair, DNA replication and chromosomal stability. DNA accessibility is regulated via a complex set of post-translational modifications of histones, also called histone code, and nucleosome remodeling. In Kluyveromyces lactis (strain ATCC 8585 / CBS 2359 / DSM 70799 / NBRC 1267 / NRRL Y-1140 / WM37) (Yeast), this protein is Histone H2B.2 (HTB1).